Here is a 147-residue protein sequence, read N- to C-terminus: Large ribosomal subunit protein uL11 (147 aa).

It belongs to the universal ribosomal protein uL11 family. As to quaternary structure, part of the ribosomal stalk of the 50S ribosomal subunit. Interacts with L10 and the large rRNA to form the base of the stalk. L10 forms an elongated spine to which L12 dimers bind in a sequential fashion forming a multimeric L10(L12)X complex. One or more lysine residues are methylated.

Forms part of the ribosomal stalk which helps the ribosome interact with GTP-bound translation factors. The sequence is that of Large ribosomal subunit protein uL11 from Sorangium cellulosum (strain So ce56) (Polyangium cellulosum (strain So ce56)).